Consider the following 94-residue polypeptide: UPF0337 protein NE2439 (94 aa).

The disordered stretch occupies residues 74–94; it reads KNVGEAVSSRQKSVKKRSLYT. A compositionally biased stretch (basic residues) spans 85–94; that stretch reads KSVKKRSLYT.

This sequence belongs to the UPF0337 (CsbD) family.

This Nitrosomonas europaea (strain ATCC 19718 / CIP 103999 / KCTC 2705 / NBRC 14298) protein is UPF0337 protein NE2439.